A 941-amino-acid polypeptide reads, in one-letter code: Gamma-aminobutyric acid type B receptor subunit 2 (941 aa).

A signal peptide spans 1-41 (MASPRSSGQPGPPPPPPPPPARLLLLLLLPLLLPLAPGAWG). The Extracellular portion of the chain corresponds to 42-483 (WARGAPRPPP…LRKISLPLYS (442 aa)). A glycan (N-linked (GlcNAc...) asparagine) is linked at asparagine 90. 3 cysteine pairs are disulfide-bonded: cysteine 108-cysteine 135, cysteine 237-cysteine 266, and cysteine 265-cysteine 302. 4 N-linked (GlcNAc...) asparagine glycosylation sites follow: asparagine 298, asparagine 389, asparagine 404, and asparagine 453. A helical transmembrane segment spans residues 484 to 504 (ILSALTILGMIMASAFLFFNI). Over 505–522 (KNRNQKLIKMSSPYMNNL) the chain is Cytoplasmic. A helical membrane pass occupies residues 523-543 (IILGGMLSYASIFLFGLDGSF). The Extracellular portion of the chain corresponds to 544–551 (VSEKTFET). A helical membrane pass occupies residues 552–572 (LCTVRTWILTVGYTTAFGAMF). Residues 573–597 (AKTWRVHAIFKNVKMKKKIIKDQKL) are Cytoplasmic-facing. The chain crosses the membrane as a helical span at residues 598–618 (LVIVGGMLLIDLCILICWQAV). The Extracellular portion of the chain corresponds to 619 to 654 (DPLRRTVEKYSMEPDPAGRDISIRPLLEHCENTHMT). A helical transmembrane segment spans residues 655–675 (IWLGIVYAYKGLLMLFGCFLA). Residues 676–691 (WETRNVSIPALNDSKY) are Cytoplasmic-facing. Residues 692–712 (IGMSVYNVGIMCIIGAAVSFL) form a helical membrane-spanning segment. Residues 713–720 (TRDQPNVQ) are Extracellular-facing. Residues 721 to 741 (FCIVALVIIFCSTITLCLVFV) traverse the membrane as a helical segment. Topologically, residues 742–941 (PKLITLRTNP…PSFRVMVSGL (200 aa)) are cytoplasmic. The disordered stretch occupies residues 763–790 (TQNQKKEDSKTSTSVTSVNQASTSRLEG). Over residues 773-787 (TSTSVTSVNQASTSR) the composition is skewed to polar residues. Serine 776 and serine 779 each carry phosphoserine. Residues 781 to 819 (NQASTSRLEGLQSENHRLRMKITELDKDLEEVTMQLQDT) are a coiled coil. At threonine 819 the chain carries Phosphothreonine. A phosphoserine mark is found at serine 884, serine 893, serine 913, serine 916, serine 920, and serine 924.

Belongs to the G-protein coupled receptor 3 family. GABA-B receptor subfamily. As to quaternary structure, heterodimer of GABBR1 and GABBR2. Homodimers may form, but are inactive. Interacts (via C-terminus) with ATF4 (via leucine zipper domain). In terms of tissue distribution, highly expressed in brain, especially in cerebral cortex, thalamus, hippocampus, frontal, occipital and temporal lobe, occipital pole and cerebellum, followed by corpus callosum, caudate nucleus, spinal cord, amygdala and medulla. Weakly expressed in heart, testis and skeletal muscle.

The protein localises to the cell membrane. Its subcellular location is the postsynaptic cell membrane. In terms of biological role, component of a heterodimeric G-protein coupled receptor for GABA, formed by GABBR1 and GABBR2. Within the heterodimeric GABA receptor, only GABBR1 seems to bind agonists, while GABBR2 mediates coupling to G proteins. Ligand binding causes a conformation change that triggers signaling via guanine nucleotide-binding proteins (G proteins) and modulates the activity of down-stream effectors, such as adenylate cyclase. Signaling inhibits adenylate cyclase, stimulates phospholipase A2, activates potassium channels, inactivates voltage-dependent calcium-channels and modulates inositol phospholipid hydrolysis. Plays a critical role in the fine-tuning of inhibitory synaptic transmission. Pre-synaptic GABA receptor inhibits neurotransmitter release by down-regulating high-voltage activated calcium channels, whereas postsynaptic GABA receptor decreases neuronal excitability by activating a prominent inwardly rectifying potassium (Kir) conductance that underlies the late inhibitory postsynaptic potentials. Not only implicated in synaptic inhibition but also in hippocampal long-term potentiation, slow wave sleep, muscle relaxation and antinociception. The polypeptide is Gamma-aminobutyric acid type B receptor subunit 2 (GABBR2) (Homo sapiens (Human)).